The chain runs to 359 residues: tRNA pseudouridine synthase B (359 aa).

D63 acts as the Nucleophile in catalysis.

It belongs to the pseudouridine synthase TruB family. Type 1 subfamily.

The catalysed reaction is uridine(55) in tRNA = pseudouridine(55) in tRNA. In terms of biological role, responsible for synthesis of pseudouridine from uracil-55 in the psi GC loop of transfer RNAs. This chain is tRNA pseudouridine synthase B, found in Psychrobacter cryohalolentis (strain ATCC BAA-1226 / DSM 17306 / VKM B-2378 / K5).